Here is a 212-residue protein sequence, read N- to C-terminus: Outer-membrane lipoprotein LolB (212 aa).

The signal sequence occupies residues 1–16 (MACRSWVLGILLVLVG). A lipid anchor (N-palmitoyl cysteine) is attached at Cys-17. The S-diacylglycerol cysteine moiety is linked to residue Cys-17.

The protein belongs to the LolB family. In terms of assembly, monomer.

It is found in the cell outer membrane. In terms of biological role, plays a critical role in the incorporation of lipoproteins in the outer membrane after they are released by the LolA protein. This is Outer-membrane lipoprotein LolB from Nitrosomonas europaea (strain ATCC 19718 / CIP 103999 / KCTC 2705 / NBRC 14298).